We begin with the raw amino-acid sequence, 227 residues long: Urease accessory protein UreF (227 aa).

The protein belongs to the UreF family. UreD, UreF and UreG form a complex that acts as a GTP-hydrolysis-dependent molecular chaperone, activating the urease apoprotein by helping to assemble the nickel containing metallocenter of UreC. The UreE protein probably delivers the nickel.

The protein localises to the cytoplasm. In terms of biological role, required for maturation of urease via the functional incorporation of the urease nickel metallocenter. The chain is Urease accessory protein UreF from Shewanella halifaxensis (strain HAW-EB4).